The sequence spans 737 residues: Catalase-peroxidase (737 aa).

The segment at 1–29 (MTDSPDATTGGCPVAHGDRLPHPTQGGAN) is disordered. The tryptophyl-tyrosyl-methioninium (Trp-Tyr) (with M-253) cross-link spans 101–227 (WHSAGTYRVS…LGATHMGLIY (127 aa)). The active-site Proton acceptor is H102. Residues 227–253 (YVNPEGPEGKPDPVAAARDIRETFGRM) constitute a cross-link (tryptophyl-tyrosyl-methioninium (Tyr-Met) (with W-101)). H268 contributes to the heme b binding site.

Belongs to the peroxidase family. Peroxidase/catalase subfamily. Homodimer or homotetramer. The cofactor is heme b. Formation of the three residue Trp-Tyr-Met cross-link is important for the catalase, but not the peroxidase activity of the enzyme.

It catalyses the reaction H2O2 + AH2 = A + 2 H2O. The enzyme catalyses 2 H2O2 = O2 + 2 H2O. Functionally, bifunctional enzyme with both catalase and broad-spectrum peroxidase activity. This is Catalase-peroxidase from Saccharopolyspora erythraea (strain ATCC 11635 / DSM 40517 / JCM 4748 / NBRC 13426 / NCIMB 8594 / NRRL 2338).